A 218-amino-acid chain; its full sequence is Small ribosomal subunit protein uS3c (218 aa).

The region spanning 43 to 118 (IKNYVQKNTR…KLNIAITRIG (76 aa)) is the KH type-2 domain.

The protein belongs to the universal ribosomal protein uS3 family. Part of the 30S ribosomal subunit.

Its subcellular location is the plastid. The protein resides in the chloroplast. The chain is Small ribosomal subunit protein uS3c (rps3) from Gossypium barbadense (Sea Island cotton).